Reading from the N-terminus, the 212-residue chain is Uracil phosphoribosyltransferase (212 aa).

5-phospho-alpha-D-ribose 1-diphosphate is bound by residues Arg78, Arg103, and Asp130–Ser138. Uracil is bound by residues Ile193 and Gly198 to Ala200. Asp199 is a binding site for 5-phospho-alpha-D-ribose 1-diphosphate.

Belongs to the UPRTase family. It depends on Mg(2+) as a cofactor.

It carries out the reaction UMP + diphosphate = 5-phospho-alpha-D-ribose 1-diphosphate + uracil. The protein operates within pyrimidine metabolism; UMP biosynthesis via salvage pathway; UMP from uracil: step 1/1. Allosterically activated by GTP. Its function is as follows. Catalyzes the conversion of uracil and 5-phospho-alpha-D-ribose 1-diphosphate (PRPP) to UMP and diphosphate. The chain is Uracil phosphoribosyltransferase from Pseudomonas paraeruginosa (strain DSM 24068 / PA7) (Pseudomonas aeruginosa (strain PA7)).